The sequence spans 208 residues: Ribonuclease HII (208 aa).

Positions 11–203 constitute an RNase H type-2 domain; the sequence is GPVAGVDEAG…VAAAHEQWLK (193 aa). A divalent metal cation-binding residues include Asp17, Glu18, and Asp112.

Belongs to the RNase HII family. Mn(2+) is required as a cofactor. It depends on Mg(2+) as a cofactor.

It is found in the cytoplasm. It catalyses the reaction Endonucleolytic cleavage to 5'-phosphomonoester.. Its function is as follows. Endonuclease that specifically degrades the RNA of RNA-DNA hybrids. This chain is Ribonuclease HII, found in Corynebacterium jeikeium (strain K411).